A 798-amino-acid polypeptide reads, in one-letter code: Capsid assembly protein UL37 homolog (798 aa).

This sequence belongs to the herpesviridae HHV-1 UL37 family.

It is found in the virion tegument. This Homo sapiens (Human) protein is Capsid assembly protein UL37 homolog (U30).